The following is a 117-amino-acid chain: NADH-ubiquinone oxidoreductase chain 3 (117 aa).

3 helical membrane-spanning segments follow: residues isoleucine 4 to isoleucine 24, isoleucine 60 to isoleucine 80, and isoleucine 86 to histidine 106.

It belongs to the complex I subunit 3 family.

It localises to the mitochondrion membrane. The catalysed reaction is a ubiquinone + NADH + 5 H(+)(in) = a ubiquinol + NAD(+) + 4 H(+)(out). Core subunit of the mitochondrial membrane respiratory chain NADH dehydrogenase (Complex I) that is believed to belong to the minimal assembly required for catalysis. Complex I functions in the transfer of electrons from NADH to the respiratory chain. The immediate electron acceptor for the enzyme is believed to be ubiquinone. The protein is NADH-ubiquinone oxidoreductase chain 3 (mt:ND3) of Drosophila subobscura (Fruit fly).